Here is a 601-residue protein sequence, read N- to C-terminus: Elongation factor 4 (601 aa).

The region spanning 7 to 189 is the tr-type G domain; the sequence is RNIRNFSIIA…AIVHRIPPPK (183 aa). GTP contacts are provided by residues 19–24 and 136–139; these read DHGKST and NKID.

Belongs to the TRAFAC class translation factor GTPase superfamily. Classic translation factor GTPase family. LepA subfamily.

It localises to the cell inner membrane. It catalyses the reaction GTP + H2O = GDP + phosphate + H(+). Functionally, required for accurate and efficient protein synthesis under certain stress conditions. May act as a fidelity factor of the translation reaction, by catalyzing a one-codon backward translocation of tRNAs on improperly translocated ribosomes. Back-translocation proceeds from a post-translocation (POST) complex to a pre-translocation (PRE) complex, thus giving elongation factor G a second chance to translocate the tRNAs correctly. Binds to ribosomes in a GTP-dependent manner. In Xanthomonas axonopodis pv. citri (strain 306), this protein is Elongation factor 4.